The sequence spans 174 residues: Small ribosomal subunit protein uS5 (174 aa).

Residues 19–82 enclose the S5 DRBM domain; it reads LREKMVAINR…DEARRKLKKI (64 aa).

Belongs to the universal ribosomal protein uS5 family. In terms of assembly, part of the 30S ribosomal subunit. Contacts proteins S4 and S8.

Its function is as follows. With S4 and S12 plays an important role in translational accuracy. Located at the back of the 30S subunit body where it stabilizes the conformation of the head with respect to the body. This is Small ribosomal subunit protein uS5 from Aromatoleum aromaticum (strain DSM 19018 / LMG 30748 / EbN1) (Azoarcus sp. (strain EbN1)).